The sequence spans 273 residues: Large ribosomal subunit protein uL2 (273 aa).

The segment at Trp213–Asn261 is disordered.

This sequence belongs to the universal ribosomal protein uL2 family. As to quaternary structure, part of the 50S ribosomal subunit. Forms a bridge to the 30S subunit in the 70S ribosome.

Functionally, one of the primary rRNA binding proteins. Required for association of the 30S and 50S subunits to form the 70S ribosome, for tRNA binding and peptide bond formation. It has been suggested to have peptidyltransferase activity; this is somewhat controversial. Makes several contacts with the 16S rRNA in the 70S ribosome. In Syntrophotalea carbinolica (strain DSM 2380 / NBRC 103641 / GraBd1) (Pelobacter carbinolicus), this protein is Large ribosomal subunit protein uL2.